We begin with the raw amino-acid sequence, 59 residues long: Large ribosomal subunit protein bL32 (59 aa).

This sequence belongs to the bacterial ribosomal protein bL32 family.

The polypeptide is Large ribosomal subunit protein bL32 (Lactiplantibacillus plantarum (strain ATCC BAA-793 / NCIMB 8826 / WCFS1) (Lactobacillus plantarum)).